Reading from the N-terminus, the 139-residue chain is ATP synthase epsilon chain (139 aa).

The protein belongs to the ATPase epsilon chain family. As to quaternary structure, F-type ATPases have 2 components, CF(1) - the catalytic core - and CF(0) - the membrane proton channel. CF(1) has five subunits: alpha(3), beta(3), gamma(1), delta(1), epsilon(1). CF(0) has three main subunits: a, b and c.

It localises to the cell inner membrane. Its function is as follows. Produces ATP from ADP in the presence of a proton gradient across the membrane. In Salmonella arizonae (strain ATCC BAA-731 / CDC346-86 / RSK2980), this protein is ATP synthase epsilon chain.